Consider the following 1756-residue polypeptide: Protein TIC 214 (1756 aa).

6 consecutive transmembrane segments (helical) span residues 18–38 (VSGP…LPFG), 54–74 (GYGI…FLSM), 79–99 (IYAA…YMFF), 128–148 (LFMD…NPVL), 163–183 (ISFM…LTIF), and 210–230 (FSLL…LPFL). The disordered stretch occupies residues 1469-1504 (KNKQVEDGQDKNGQVEDQDGQDQDGQVEDQQTDGKK). Residues 1471 to 1482 (KQVEDGQDKNGQ) show a composition bias toward basic and acidic residues. The span at 1484–1499 (EDQDGQDQDGQVEDQQ) shows a compositional bias: acidic residues.

It belongs to the TIC214 family. Part of the Tic complex.

It localises to the plastid. The protein resides in the chloroplast inner membrane. Its function is as follows. Involved in protein precursor import into chloroplasts. May be part of an intermediate translocation complex acting as a protein-conducting channel at the inner envelope. The sequence is that of Protein TIC 214 from Pinus thunbergii (Japanese black pine).